A 342-amino-acid polypeptide reads, in one-letter code: Phosphate acyltransferase (342 aa).

It belongs to the PlsX family. Homodimer. Probably interacts with PlsY.

The protein resides in the cytoplasm. It carries out the reaction a fatty acyl-[ACP] + phosphate = an acyl phosphate + holo-[ACP]. It functions in the pathway lipid metabolism; phospholipid metabolism. Functionally, catalyzes the reversible formation of acyl-phosphate (acyl-PO(4)) from acyl-[acyl-carrier-protein] (acyl-ACP). This enzyme utilizes acyl-ACP as fatty acyl donor, but not acyl-CoA. This chain is Phosphate acyltransferase, found in Trichormus variabilis (strain ATCC 29413 / PCC 7937) (Anabaena variabilis).